The chain runs to 1360 residues: Probable inactive protein kinase DDB_G0270444 (1360 aa).

WD repeat units lie at residues 44 to 83, 109 to 152, 166 to 205, and 208 to 247; these read SSKR…IKQL, IRNI…AVYN, TTSA…IMGT, and GHSR…QITG. The region spanning 636–954 is the Protein kinase domain; that stretch reads EKSIQTYLSN…IEQALSHPFI (319 aa). Residues 959–979 show a composition bias toward low complexity; that stretch reads KQQQQQQQQKQQQQQQQQQQQ. Disordered stretches follow at residues 959–989, 1258–1311, and 1331–1360; these read KQQQ…DSLT, IISE…VEEE, and EVEE…SNDF. Coiled-coil stretches lie at residues 1014 to 1269 and 1297 to 1352; these read SKIK…QEGE and NASD…QVED. Over residues 1291–1300 the composition is skewed to basic and acidic residues; the sequence is LERDNKNASD. Composition is skewed to acidic residues over residues 1301-1311 and 1331-1354; these read HDDEQQFVEEE and EVEE…EDDT.

The protein belongs to the protein kinase superfamily. CMGC Ser/Thr protein kinase family.

The sequence is that of Probable inactive protein kinase DDB_G0270444 from Dictyostelium discoideum (Social amoeba).